The chain runs to 83 residues: uncharacterized protein (83 aa).

The next 2 membrane-spanning stretches (helical) occupy residues 11-31 (FYCI…SFLL) and 48-68 (WHNL…HIWM).

Its subcellular location is the cell membrane. This is an uncharacterized protein from Bacillus subtilis (strain 168).